A 276-amino-acid polypeptide reads, in one-letter code: Diaminopimelate epimerase (276 aa).

N13, Q46, and N66 together coordinate substrate. The active-site Proton donor is C75. Residues 76 to 77 (GN), N159, N192, and 210 to 211 (ER) contribute to the substrate site. Residue C219 is the Proton acceptor of the active site. 220–221 (GT) lines the substrate pocket.

Belongs to the diaminopimelate epimerase family. In terms of assembly, homodimer.

It is found in the cytoplasm. The catalysed reaction is (2S,6S)-2,6-diaminopimelate = meso-2,6-diaminopimelate. It participates in amino-acid biosynthesis; L-lysine biosynthesis via DAP pathway; DL-2,6-diaminopimelate from LL-2,6-diaminopimelate: step 1/1. Functionally, catalyzes the stereoinversion of LL-2,6-diaminopimelate (L,L-DAP) to meso-diaminopimelate (meso-DAP), a precursor of L-lysine and an essential component of the bacterial peptidoglycan. The protein is Diaminopimelate epimerase of Azotobacter vinelandii (strain DJ / ATCC BAA-1303).